Here is a 478-residue protein sequence, read N- to C-terminus: RNA-binding protein 42 (478 aa).

Residues 1–20 (MASAMAGAGPAPGLPVAGGP) are compositionally biased toward low complexity. Residues 1–33 (MASAMAGAGPAPGLPVAGGPVVPGPGVGIPGKS) form a disordered region. Ala2 carries the post-translational modification N-acetylalanine. Residue Ser133 is modified to Phosphoserine. Asymmetric dimethylarginine occurs at positions 151, 156, 166, and 179. Disordered stretches follow at residues 171–207 (LSSAAGGPRPMALRPPHQALVGPPLPGPPGPPMMLPP) and 317–354 (SLRPRPRPPRPEPPPGLMALEVPEPLGEDKKKGKPEKL). The segment covering 193–205 (PPLPGPPGPPMML) has biased composition (pro residues). Residues 234–478 (ELGLGLGLGL…QKEKKKLGLR (245 aa)) form a necessary for interaction with HNRNPK region. Residues 343–354 (GEDKKKGKPEKL) are compositionally biased toward basic and acidic residues. Positions 379–457 (FRIFCGDLGN…RPIKLRKSMW (79 aa)) constitute an RRM domain.

Belongs to the RRM RBM42 family. Interacts with HNRNPK. Expressed in cell lines (at protein level). Expressed in heart, brain, spleen, lung, liver, skeletal muscle, kidney and testis.

The protein resides in the nucleus. Its subcellular location is the cytoplasm. Functionally, binds (via the RRM domain) to the 3'-untranslated region (UTR) of CDKN1A mRNA. This is RNA-binding protein 42 (Rbm42) from Mus musculus (Mouse).